Here is a 508-residue protein sequence, read N- to C-terminus: Zinc finger CCCH-type with G patch domain-containing protein (508 aa).

The C3H1-type zinc-finger motif lies at 154–177; that stretch reads PCNYYLEGECRFDETRCRYSHGAL. The interval 253–279 is disordered; sequence DDELSSDSEETNETDGSDAANESDMDD. One can recognise a G-patch domain in the interval 309–355; it reads TRGIGSKLMASMGYIHGTGLGSDGRGIVTPVSAQILPQGRSLDACME. Residues 486 to 495 show a composition bias toward polar residues; sequence QAQESSLSKE. The interval 486–508 is disordered; that stretch reads QAQESSLSKEQQTRKSKNKMFEF. The span at 499-508 shows a compositional bias: basic residues; that stretch reads RKSKNKMFEF.

It localises to the nucleus. Its function is as follows. Transcription repressor. This is Zinc finger CCCH-type with G patch domain-containing protein from Drosophila virilis (Fruit fly).